The sequence spans 38 residues: Potassium channel toxin alpha-KTx 3.17 (38 aa).

3 disulfides stabilise this stretch: C8–C28, C14–C33, and C18–C35.

It belongs to the short scorpion toxin superfamily. Potassium channel inhibitor family. Alpha-KTx 03 subfamily. Expressed by the venom gland.

It localises to the secreted. Completely inhibits the (125)I-kaliotoxin binding on rat brain synaptosomes with high-affinity (IC(50)=0.1 nM). Is a potent Kv1.3/KCNA3 ligand. The chain is Potassium channel toxin alpha-KTx 3.17 from Buthus paris (Scorpion).